The chain runs to 363 residues: Putative agmatine deiminase 1 (363 aa).

Residue Cys356 is the Amidino-cysteine intermediate of the active site.

Belongs to the agmatine deiminase family.

The enzyme catalyses agmatine + H2O = N-carbamoylputrescine + NH4(+). This Listeria monocytogenes serovar 1/2a (strain ATCC BAA-679 / EGD-e) protein is Putative agmatine deiminase 1.